Reading from the N-terminus, the 115-residue chain is Biotrophy-associated secreted protein 1 (115 aa).

Positions 1 to 22 (MHVFNFAALFTVLATFTATAAA) are cleaved as a signal peptide. Positions 24–115 (DQGSNTFDQR…GIRRVENYYP (92 aa)) are disordered. 2 stretches are compositionally biased toward basic and acidic residues: residues 46-55 (IREEKQENVG) and 91-115 (QQKE…NYYP).

Its subcellular location is the secreted. It is found in the host cytoplasm. In terms of biological role, secreted effector involved in biotrophic colonization of plant cells. Induces an early, basal defense response in susceptible rice, including rapid callose deposition and ROS production in leaves and calli. Also promotes sporulation and mycelia growth suggesting a role across the whole process of interaction, from the biotrophic phase to sporulation. This chain is Biotrophy-associated secreted protein 1, found in Pyricularia oryzae (strain 70-15 / ATCC MYA-4617 / FGSC 8958) (Rice blast fungus).